A 596-amino-acid chain; its full sequence is Elongation factor 4 (596 aa).

One can recognise a tr-type G domain in the interval 2–184 (KHIRNFSIIA…EIVAKIPPPV (183 aa)). GTP contacts are provided by residues 14 to 19 (DHGKST) and 131 to 134 (NKID).

It belongs to the TRAFAC class translation factor GTPase superfamily. Classic translation factor GTPase family. LepA subfamily.

Its subcellular location is the cell inner membrane. It carries out the reaction GTP + H2O = GDP + phosphate + H(+). Functionally, required for accurate and efficient protein synthesis under certain stress conditions. May act as a fidelity factor of the translation reaction, by catalyzing a one-codon backward translocation of tRNAs on improperly translocated ribosomes. Back-translocation proceeds from a post-translocation (POST) complex to a pre-translocation (PRE) complex, thus giving elongation factor G a second chance to translocate the tRNAs correctly. Binds to ribosomes in a GTP-dependent manner. The protein is Elongation factor 4 of Shewanella denitrificans (strain OS217 / ATCC BAA-1090 / DSM 15013).